The chain runs to 265 residues: 5'-nucleotidase SurE (265 aa).

A divalent metal cation contacts are provided by Asp-8, Asp-9, Ser-41, and Asn-100.

The protein belongs to the SurE nucleotidase family. A divalent metal cation serves as cofactor.

It is found in the cytoplasm. The catalysed reaction is a ribonucleoside 5'-phosphate + H2O = a ribonucleoside + phosphate. Functionally, nucleotidase that shows phosphatase activity on nucleoside 5'-monophosphates. This Brevibacillus brevis (strain 47 / JCM 6285 / NBRC 100599) protein is 5'-nucleotidase SurE.